A 635-amino-acid chain; its full sequence is Glutamine--fructose-6-phosphate aminotransferase [isomerizing] (635 aa).

Cys2 serves as the catalytic Nucleophile; for GATase activity. One can recognise a Glutamine amidotransferase type-2 domain in the interval 2–218; the sequence is CGIVGMVAGR…EGDIADVHRD (217 aa). 2 consecutive SIS domains span residues 299-439 and 472-625; these read FERL…AKKI and CARH…IDQP. Lys630 functions as the For Fru-6P isomerization activity in the catalytic mechanism.

As to quaternary structure, homodimer.

It is found in the cytoplasm. It catalyses the reaction D-fructose 6-phosphate + L-glutamine = D-glucosamine 6-phosphate + L-glutamate. In terms of biological role, catalyzes the first step in hexosamine metabolism, converting fructose-6P into glucosamine-6P using glutamine as a nitrogen source. The protein is Glutamine--fructose-6-phosphate aminotransferase [isomerizing] of Treponema pallidum (strain Nichols).